We begin with the raw amino-acid sequence, 435 residues long: Methylenetetrahydrofolate--tRNA-(uracil-5-)-methyltransferase TrmFO (435 aa).

9–14 (GGGLAG) lines the FAD pocket.

The protein belongs to the MnmG family. TrmFO subfamily. Requires FAD as cofactor.

Its subcellular location is the cytoplasm. It carries out the reaction uridine(54) in tRNA + (6R)-5,10-methylene-5,6,7,8-tetrahydrofolate + NADH + H(+) = 5-methyluridine(54) in tRNA + (6S)-5,6,7,8-tetrahydrofolate + NAD(+). The enzyme catalyses uridine(54) in tRNA + (6R)-5,10-methylene-5,6,7,8-tetrahydrofolate + NADPH + H(+) = 5-methyluridine(54) in tRNA + (6S)-5,6,7,8-tetrahydrofolate + NADP(+). In terms of biological role, catalyzes the folate-dependent formation of 5-methyl-uridine at position 54 (M-5-U54) in all tRNAs. This chain is Methylenetetrahydrofolate--tRNA-(uracil-5-)-methyltransferase TrmFO, found in Citrifermentans bemidjiense (strain ATCC BAA-1014 / DSM 16622 / JCM 12645 / Bem) (Geobacter bemidjiensis).